The sequence spans 950 residues: Translation initiation factor IF-2 (950 aa).

Composition is skewed to basic and acidic residues over residues 128–158, 165–186, 200–234, and 291–312; these read KPKVAEPVKKSEPKAAAKAEETKVEKVEAKA, AEVKTENVADKKEPVVTEEKKK, KRAEDIKKEQAAARPEKKKFDKNRNDRNNRNDNRR, and NRRDRDRKKTDSNRDNTKDGNR. The disordered stretch occupies residues 128 to 354; that stretch reads KPKVAEPVKK…NNQSSSVPAT (227 aa). 2 stretches are compositionally biased toward polar residues: residues 322-336 and 343-353; these read NRNQVRNARNSNWNQ and YQNNQSSSVPA. In terms of domain architecture, tr-type G spans 448-619; sequence ERPAVVTIMG…LLVAEVQELK (172 aa). A G1 region spans residues 457 to 464; that stretch reads GHVDHGKT. 457–464 is a GTP binding site; it reads GHVDHGKT. The interval 482–486 is G2; sequence GITQH. Residues 503 to 506 form a G3 region; that stretch reads DTPG. Residues 503-507 and 557-560 each bind GTP; these read DTPGH and NKID. Residues 557-560 form a G4 region; sequence NKID. The tract at residues 595–597 is G5; the sequence is SAK.

The protein belongs to the TRAFAC class translation factor GTPase superfamily. Classic translation factor GTPase family. IF-2 subfamily.

It localises to the cytoplasm. One of the essential components for the initiation of protein synthesis. Protects formylmethionyl-tRNA from spontaneous hydrolysis and promotes its binding to the 30S ribosomal subunits. Also involved in the hydrolysis of GTP during the formation of the 70S ribosomal complex. This is Translation initiation factor IF-2 from Lactococcus lactis subsp. cremoris (strain MG1363).